A 291-amino-acid chain; its full sequence is Energy-coupling factor transporter ATP-binding protein EcfA2 (291 aa).

Residues 3-246 (ITFKDVSYTY…PEWLTSKQLG (244 aa)) enclose the ABC transporter domain. An ATP-binding site is contributed by 40-47 (GHTGSGKS).

It belongs to the ABC transporter superfamily. Energy-coupling factor EcfA family. In terms of assembly, forms a stable energy-coupling factor (ECF) transporter complex composed of 2 membrane-embedded substrate-binding proteins (S component), 2 ATP-binding proteins (A component) and 2 transmembrane proteins (T component).

The protein localises to the cell membrane. Its function is as follows. ATP-binding (A) component of a common energy-coupling factor (ECF) ABC-transporter complex. Unlike classic ABC transporters this ECF transporter provides the energy necessary to transport a number of different substrates. This is Energy-coupling factor transporter ATP-binding protein EcfA2 from Latilactobacillus sakei subsp. sakei (strain 23K) (Lactobacillus sakei subsp. sakei).